Here is a 382-residue protein sequence, read N- to C-terminus: Protein delta homolog 2 (382 aa).

The first 26 residues, 1 to 26 (MPSGCRCLNLVCLLCILGATSQPARA), serve as a signal peptide directing secretion. 4 consecutive EGF-like domains span residues 27 to 58 (DDCS…LHCE), 62 to 89 (RMPG…KFCD), 91 to 129 (DEHI…RGCE), and 131 to 172 (KAGP…AHCE). The Extracellular portion of the chain corresponds to 27-305 (DDCSSHCDLA…RQEAGLGESS (279 aa)). 17 cysteine pairs are disulfide-bonded: Cys-29/Cys-40, Cys-33/Cys-46, Cys-48/Cys-57, Cys-66/Cys-71, Cys-79/Cys-88, Cys-95/Cys-107, Cys-101/Cys-117, Cys-119/Cys-128, Cys-135/Cys-148, Cys-142/Cys-160, Cys-162/Cys-171, Cys-178/Cys-189, Cys-183/Cys-198, Cys-200/Cys-209, Cys-216/Cys-227, Cys-221/Cys-236, and Cys-238/Cys-247. N-linked (GlcNAc...) asparagine glycosylation is present at Asn-157. The EGF-like 5; calcium-binding domain maps to 174–210 (NVDDCLMRPCANGATCIDGINRFSCLCPEGFAGRFCT). The EGF-like 6; calcium-binding domain occupies 212-248 (NLDDCASRPCQRGARCRDRVHDFDCLCPSGYGGKTCE). The helical transmembrane segment at 306-326 (LVALVVFGSLTAALVLATVLL) threads the bilayer. At 327–382 (TLRAWRRGICPTGPCCDPAPHYAPARQDQECQVSMLPAGFPLSPDLPPEPGKTTAL) the chain is on the cytoplasmic side.

The protein resides in the membrane. Regulates adipogenesis. The chain is Protein delta homolog 2 (Dlk2) from Rattus norvegicus (Rat).